The primary structure comprises 424 residues: Inhibin beta A chain (424 aa).

The first 20 residues, 1–20 (MPLLWLRGFLLASCWIIVRS), serve as a signal peptide directing secretion. A propeptide spanning residues 21–308 (SPTPGSEGPG…EDHPHRRRRR (288 aa)) is cleaved from the precursor. Asn-165 carries an N-linked (GlcNAc...) asparagine glycan. The interval 257–288 (KKKKKEEEGEGKKKDGGDGGAGADEDKEQSHR) is disordered. Basic and acidic residues predominate over residues 261-273 (KEEEGEGKKKDGG). Disulfide bonds link Cys-312–Cys-320, Cys-319–Cys-389, Cys-348–Cys-421, and Cys-352–Cys-423.

This sequence belongs to the TGF-beta family. Dimeric, linked by one or more disulfide bonds. Inhibin A is a dimer of alpha/INHA and beta-A/INHBA. Activin A is a homodimer of beta-A/INHBA. Activin AB is a dimer of beta-A/INHBA and beta-B/INHBB. Interacts with FST and FSTL3; these interactions prevent activin A interaction to its type II receptor. Activin A interacts with ACVR2A. Activin A interacts with BMPR2. Inhibin A interacts with ACVR1; this interaction creates a non-signaling complex (NSC) that inhibits ACVR1-mediated BMP signaling. Inhibin A interacts with ACVR2A.

Its subcellular location is the secreted. Functionally, inhibins/activins are involved in regulating a number of diverse functions such as hypothalamic and pituitary hormone secretion, gonadal hormone secretion, germ cell development and maturation, erythroid differentiation, insulin secretion, nerve cell survival, embryonic axial development or bone growth, depending on their subunit composition. Activin A is a homodimer of INHBA that plays a role in several essential biological processes including embryonic development, stem cell maintenance and differentiation, haematopoiesis, cell proliferation and tissue fibrosis. Signals through type I (such as ACVR1B or ACVR1C) and type II receptors (such as ACVR2A, ACVR2B or BMPR2) which, upon ligand binding, phosphorylate SMAD2 and SMAD3 intracellular signaling mediators that form a complex with SMAD4, translocate to the nucleus and modulate gene expression. Can also activate alternative non-canonical intracellular signaling pathways including the p38 MAPK, extracellular signal-regulated kinases 1/2 (ERK1/2) and c-Jun N-terminal kinases (JNKs) to modulate cell migration and differentiation. Alternatively, promotes osteoblastic differentiation via ACVRL1-SMAD1/5/9 pathway. In addition, can engage the type I receptor ACVR1 to form an ACVR1-activin A-type II receptor non-signaling complex (NSC) that renders receptors unavailable for engagement with BMPs, hence resulting in an apparent inhibition of ACVR1-mediated BMP signaling. Its function is as follows. Inhibin A is a dimer of alpha/INHA and beta-A/INHBA that functions as a feedback regulator in the hypothalamic-pituitary-gonadal (HPG) axis. Inhibits the secretion of FSH from the anterior pituitary gland by acting on pituitary gonadotrope cells. Antagonizes activin A by binding to the proteoglycan, betaglycan, and forming a stable complex with and, thereby, sequestering type II activin receptors while excluding type I receptor. The protein is Inhibin beta A chain (INHBA) of Felis catus (Cat).